Consider the following 72-residue polypeptide: Prokaryotic ubiquitin-like protein Pup (72 aa).

The span at M1–Q10 shows a compositional bias: gly residues. Residues M1–D45 form a disordered region. The stretch at G9–E60 forms a coiled coil. Positions Q28–F66 are ARC ATPase binding. Residues E31 to D42 are compositionally biased toward basic and acidic residues. E72 is covalently cross-linked (Isoglutamyl lysine isopeptide (Glu-Lys) (interchain with K-? in acceptor proteins)).

This sequence belongs to the prokaryotic ubiquitin-like protein family. As to quaternary structure, strongly interacts with the proteasome-associated ATPase ARC through a hydrophobic interface; the interacting region of Pup lies in its C-terminal half. There is one Pup binding site per ARC hexamer ring.

The protein operates within protein degradation; proteasomal Pup-dependent pathway. In terms of biological role, protein modifier that is covalently attached to lysine residues of substrate proteins, thereby targeting them for proteasomal degradation. The tagging system is termed pupylation. In Streptomyces avermitilis (strain ATCC 31267 / DSM 46492 / JCM 5070 / NBRC 14893 / NCIMB 12804 / NRRL 8165 / MA-4680), this protein is Prokaryotic ubiquitin-like protein Pup.